The chain runs to 218 residues: Large ribosomal subunit protein uL3 (218 aa).

The disordered stretch occupies residues 126-169 (HGFSRGPMTHGSKNHRQPGSIGAGTTPGRIYPGKRMSGRYGGKK).

The protein belongs to the universal ribosomal protein uL3 family. As to quaternary structure, part of the 50S ribosomal subunit. Forms a cluster with proteins L14 and L19.

Functionally, one of the primary rRNA binding proteins, it binds directly near the 3'-end of the 23S rRNA, where it nucleates assembly of the 50S subunit. The chain is Large ribosomal subunit protein uL3 from Synechococcus sp. (strain CC9902).